We begin with the raw amino-acid sequence, 193 residues long: Lipid A acyltransferase PagP (193 aa).

A signal peptide spans 1–32 (MNGMAVVMIIRKYFLIIALLVMPWLAIPSVSA). Residues His65, Asp108, and Ser109 contribute to the active site.

This sequence belongs to the lipid A palmitoyltransferase family. Homodimer.

The protein localises to the cell outer membrane. The catalysed reaction is a lipid A + a 1,2-diacyl-sn-glycero-3-phosphocholine = a hepta-acyl lipid A + a 2-acyl-sn-glycero-3-phosphocholine. It carries out the reaction a lipid IVA + a 1,2-diacyl-sn-glycero-3-phosphocholine = a lipid IVB + a 2-acyl-sn-glycero-3-phosphocholine. It catalyses the reaction a lipid IIA + a 1,2-diacyl-sn-glycero-3-phosphocholine = a lipid IIB + a 2-acyl-sn-glycero-3-phosphocholine. Its function is as follows. Transfers a fatty acid residue from the sn-1 position of a phospholipid to the N-linked hydroxyfatty acid chain on the proximal unit of lipid A or its precursors. The chain is Lipid A acyltransferase PagP from Salmonella paratyphi C (strain RKS4594).